We begin with the raw amino-acid sequence, 163 residues long: 18 kDa protein (163 aa).

In Mus musculus (Mouse), this protein is 18 kDa protein.